The sequence spans 517 residues: Ammonium transporter 3 (517 aa).

The Extracellular portion of the chain corresponds to 1 to 32 (MLNEPNALLRRDANSTIATVTELFPNEYSNAD). Residues 33 to 53 (IAYVLLSTVVVFTVTPGIALY) form a helical membrane-spanning segment. The Cytoplasmic portion of the chain corresponds to 54–69 (YAGMVRKNSALSILTQ). Residues 70–90 (SFLVTAVVFIQWYLFGYSLAC) traverse the membrane as a helical segment. Topologically, residues 91–118 (SSGSSFYGTLWQGGMNHLWLEPYIPGST) are extracellular. A helical transmembrane segment spans residues 119–139 (IPAIVYFPFGGLFAVATAQLF). Residues 140–148 (AGAMAERGR) lie on the Cytoplasmic side of the membrane. The chain crosses the membrane as a helical span at residues 149–169 (LIPSLVISFLYITLVYCPQAY). The Extracellular segment spans residues 170–180 (WTWAPNGWLYT). Residues 181-201 (LGALDFAGGGPVHISSGFAAL) form a helical membrane-spanning segment. Topologically, residues 202–272 (AYSLCLGRRI…AHNPPHDAGM (71 aa)) are cytoplasmic. Residues 273 to 293 (VYIGVVLIWFAWLCFNSGTLL) form a helical membrane-spanning segment. Topologically, residues 294-299 (TVNIRT) are extracellular. The chain crosses the membrane as a helical span at residues 300–320 (AYIMTNTLISSSFGALTWAII). Over 321–327 (DYIRYRK) the chain is Cytoplasmic. A helical transmembrane segment spans residues 328–348 (FSTIGICEGAIAGLVGITPAC). Position 349 (G349) is a topological domain, extracellular. Residues 350 to 370 (FVFPWGAAAGGIVPALVCNFL) form a helical membrane-spanning segment. Residues 371 to 384 (HDLNEWIGVDETLR) are Cytoplasmic-facing. Residues 385–405 (VFNLHGIGGIVGSIVLGVVAH) form a helical membrane-spanning segment. Residues 406 to 432 (PDVAASDGATVIDGGWAVHHWKQMGYQ) are Extracellular-facing. Residues 433–453 (FAGFTSVAAWSFVITAIICLL) form a helical membrane-spanning segment. Topologically, residues 454-517 (VDLVPGLHIR…NIKQEKQDEF (64 aa)) are cytoplasmic.

Belongs to the ammonia transporter channel (TC 1.A.11.2) family.

The protein resides in the membrane. Transporter for ammonium to use as a nitrogen source. The protein is Ammonium transporter 3 (amt3) of Schizosaccharomyces pombe (strain 972 / ATCC 24843) (Fission yeast).